We begin with the raw amino-acid sequence, 550 residues long: Amino acid transporter AVT1D (550 aa).

Residues 1 to 16 (MKLDEEFLHDRDHSFL) show a composition bias toward basic and acidic residues. A disordered region spans residues 1–99 (MKLDEEFLHD…FMPQSSSRRL (99 aa)). The span at 84-99 (TPPSVSFMPQSSSRRL) shows a compositional bias: polar residues. 11 helical membrane-spanning segments follow: residues 164 to 184 (SVLN…PYAI), 189 to 209 (WLGL…GVLM), 236 to 256 (FIIS…YIIM), 264 to 286 (LFPN…IFAI), 308 to 328 (SVGG…VGAV), 345 to 365 (LPVT…FPNI), 375 to 395 (FPLV…AVAV), 424 to 444 (VWTA…PIVM), 459 to 479 (GVSI…ALSV), 481 to 501 (FFAI…ALIF), and 521 to 541 (LCIF…YSAI).

This sequence belongs to the amino acid/polyamine transporter 2 family. Amino acid/auxin permease (AAAP) (TC 2.A.18.5) subfamily.

It is found in the membrane. This chain is Amino acid transporter AVT1D, found in Arabidopsis thaliana (Mouse-ear cress).